The primary structure comprises 769 residues: Serine protease HtrA-like (769 aa).

The span at 1-20 (MDIGKKHVIPKSQYRRKRRE) shows a compositional bias: basic residues. The segment at 1 to 390 (MDIGKKHVIP…ATSKLNKGRA (390 aa)) is disordered. Composition is skewed to basic and acidic residues over residues 21–64 (FFHN…ERFK) and 71–108 (LEQRNRDVNENKAEESKSNQDSKSAYNRDHYLTDDVSK). A compositionally biased stretch (polar residues) spans 126–137 (YEQNSEATLSTK). Positions 138–186 (STDKVESTEMRKLSSDKNKVGHEEQHVLSKPSEHDKETRIDSESSRTDS) are enriched in basic and acidic residues. The segment covering 247 to 262 (QQSQNEQTKTYTYGDS) has biased composition (polar residues). Basic and acidic residues-rich tracts occupy residues 264 to 296 (QNDKSNHENDLSHHIPSISDDKDNVMRENHIVD) and 310 to 330 (KTDDDRKLDEKIHVEDKHKQN). The span at 331–347 (ADSSETVGYQSQSTASH) shows a compositional bias: polar residues. Residues 348–364 (RSTEKRNISINDHDKLN) show a composition bias toward basic and acidic residues. Residues 365-390 (GQKTNTKTSANNNQKKATSKLNKGRA) are compositionally biased toward polar residues. The chain crosses the membrane as a helical span at residues 410-430 (LVILMGIIILIVILNAIFNNV). Active-site charge relay system residues include H504, D534, and S619. The PDZ domain occupies 680 to 733 (IVSLNSFERQAVKLPGKVKNGVVVDQVDNNGLADQSGLKKGDVITELDGKLLED).

The protein belongs to the peptidase S1C family.

Its subcellular location is the cell membrane. The polypeptide is Serine protease HtrA-like (Staphylococcus aureus (strain NCTC 8325 / PS 47)).